Consider the following 22-residue polypeptide: Pectinesterase (22 aa).

Aspartate 6 functions as the Proton donor in the catalytic mechanism. 2 residues coordinate substrate: arginine 19 and tryptophan 21.

It belongs to the pectinesterase family.

The protein localises to the secreted. It localises to the cell wall. It catalyses the reaction [(1-&gt;4)-alpha-D-galacturonosyl methyl ester](n) + n H2O = [(1-&gt;4)-alpha-D-galacturonosyl](n) + n methanol + n H(+). Its pathway is glycan metabolism; pectin degradation; 2-dehydro-3-deoxy-D-gluconate from pectin: step 1/5. This is Pectinesterase from Capsicum chinense (Scotch bonnet).